A 362-amino-acid polypeptide reads, in one-letter code: GDSL esterase/lipase 6 (362 aa).

A signal peptide spans 1–23; it reads MSSSSSMDLLMCLLLLISPVVLA. The active-site Nucleophile is the Ser-38. Asn-50, Asn-103, Asn-107, Asn-195, and Asn-296 each carry an N-linked (GlcNAc...) asparagine glycan. Catalysis depends on residues Asp-323 and His-326.

This sequence belongs to the 'GDSL' lipolytic enzyme family.

The protein localises to the secreted. The sequence is that of GDSL esterase/lipase 6 (GLIP6) from Arabidopsis thaliana (Mouse-ear cress).